Here is a 381-residue protein sequence, read N- to C-terminus: E3 ubiquitin-protein ligase RNF13 (381 aa).

The first 34 residues, Met1–Ala34, serve as a signal peptide directing secretion. The Lumenal portion of the chain corresponds to Asp35–Tyr182. The 96-residue stretch at Lys65–Asp160 folds into the PA domain. The N-linked (GlcNAc...) asparagine glycan is linked to Asn88. Residues Tyr183–Ile203 traverse the membrane as a helical segment. Topologically, residues Thr204 to Val381 are cytoplasmic. Residues Cys240 to Lys282 form an RING-type; atypical zinc finger. A disordered region spans residues Val285–Val381. Acidic residues-rich tracts occupy residues Ser292 to Glu304 and Ser339 to Glu357.

In terms of assembly, interacts with ERN1. Autoubiquitinated. Widely expressed (at protein level). In normal pancreas, expressed in islets, but not in ducts, nor in acini (at protein level).

The protein resides in the endoplasmic reticulum membrane. It is found in the late endosome membrane. The protein localises to the lysosome membrane. It localises to the nucleus inner membrane. The catalysed reaction is S-ubiquitinyl-[E2 ubiquitin-conjugating enzyme]-L-cysteine + [acceptor protein]-L-lysine = [E2 ubiquitin-conjugating enzyme]-L-cysteine + N(6)-ubiquitinyl-[acceptor protein]-L-lysine.. It functions in the pathway protein modification; protein ubiquitination. Functionally, E3 ubiquitin-protein ligase that regulates cell proliferation. Involved in apoptosis regulation. Mediates ER stress-induced activation of JNK signaling pathway and apoptosis by promoting ERN1 activation and splicing of XBP1 mRNA. Also involved in protein trafficking and localization. The sequence is that of E3 ubiquitin-protein ligase RNF13 from Homo sapiens (Human).